The primary structure comprises 163 residues: Large ribosomal subunit protein uL10 (163 aa).

Belongs to the universal ribosomal protein uL10 family. Part of the ribosomal stalk of the 50S ribosomal subunit. The N-terminus interacts with L11 and the large rRNA to form the base of the stalk. The C-terminus forms an elongated spine to which L12 dimers bind in a sequential fashion forming a multimeric L10(L12)X complex.

In terms of biological role, forms part of the ribosomal stalk, playing a central role in the interaction of the ribosome with GTP-bound translation factors. The protein is Large ribosomal subunit protein uL10 of Haemophilus influenzae (strain 86-028NP).